The primary structure comprises 129 residues: Capsid protein (129 aa).

Residues 31-104 (EWISSNSRSQ…FATNSDCELI (74 aa)) are viral RNA-binding.

It belongs to the Leviviricetes capsid protein family. As to quaternary structure, homodimer. The capsid proteins form dimers that assemble by group of 5. Twelve such pentamers are linked together with free dimers. The homodimers binds to the viral RNA via an operator hairpin, but also to many other RNA sequences in the viral genome; this interaction probably shifts the virus from the replicative to the assembly phase and ensures specific encapsidation of the viral genome.

Its subcellular location is the virion. In terms of biological role, capsid protein self-assembles to form an icosahedral capsid with a T=3 symmetry, about 26 nm in diameter, and consisting of 89 capsid proteins dimers (178 capsid proteins). Involved in viral genome encapsidation through the interaction between a capsid protein dimer and the multiple packaging signals present in the RNA genome. The capsid also contains 1 copy of the A2 maturation protein. Acts as a translational repressor of viral replicase synthesis late in infection. This latter function is the result of capsid protein interaction with an RNA hairpin which contains the replicase ribosome-binding site. The protein is Capsid protein of Enterobacteria phage f2 (Bacteriophage f2).